Here is a 1050-residue protein sequence, read N- to C-terminus: RecBCD enzyme subunit RecB (1050 aa).

Positions 1 to 443 (MKPFNIFDSN…LQLVNNYRST (443 aa)) constitute a UvrD-like helicase ATP-binding domain. The segment at 1–766 (MKPFNIFDSN…TNYVKLEGTQ (766 aa)) is DNA-binding and helicase activity, interacts with RecC. 21-28 (ASAGTGKT) provides a ligand contact to ATP. In terms of domain architecture, UvrD-like helicase C-terminal spans 458-701 (SPFLEIPGYL…KITTIHSSKG (244 aa)). A nuclease activity, interacts with RecD and RecA region spans residues 814–1050 (PKTIFSFSST…KAIQKCQAYH (237 aa)). Histidine 859, aspartate 945, and aspartate 958 together coordinate Mg(2+). Catalysis depends on aspartate 958, which acts as the For nuclease activity.

Belongs to the helicase family. UvrD subfamily. Heterotrimer of RecB, RecC and RecD. All subunits contribute to DNA-binding. Interacts with RecA. The cofactor is Mg(2+).

The enzyme catalyses Exonucleolytic cleavage (in the presence of ATP) in either 5'- to 3'- or 3'- to 5'-direction to yield 5'-phosphooligonucleotides.. It carries out the reaction Couples ATP hydrolysis with the unwinding of duplex DNA by translocating in the 3'-5' direction.. The catalysed reaction is ATP + H2O = ADP + phosphate + H(+). Functionally, a helicase/nuclease that prepares dsDNA breaks (DSB) for recombinational DNA repair. Binds to DSBs and unwinds DNA via a highly rapid and processive ATP-dependent bidirectional helicase activity. Unwinds dsDNA until it encounters a Chi (crossover hotspot instigator) sequence from the 3' direction. Cuts ssDNA a few nucleotides 3' to the Chi site. The properties and activities of the enzyme are changed at Chi. The Chi-altered holoenzyme produces a long 3'-ssDNA overhang and facilitates RecA-binding to the ssDNA for homologous DNA recombination and repair. Holoenzyme degrades any linearized DNA that is unable to undergo homologous recombination. In the holoenzyme this subunit contributes ATPase, 3'-5' helicase, exonuclease activity and loads RecA onto ssDNA. The protein is RecBCD enzyme subunit RecB of Chlamydia pneumoniae (Chlamydophila pneumoniae).